A 135-amino-acid polypeptide reads, in one-letter code: ATP synthase epsilon chain (135 aa).

This sequence belongs to the ATPase epsilon chain family. F-type ATPases have 2 components, CF(1) - the catalytic core - and CF(0) - the membrane proton channel. CF(1) has five subunits: alpha(3), beta(3), gamma(1), delta(1), epsilon(1). CF(0) has three main subunits: a, b and c.

Its subcellular location is the cell inner membrane. Its function is as follows. Produces ATP from ADP in the presence of a proton gradient across the membrane. This chain is ATP synthase epsilon chain, found in Rhodopseudomonas palustris (strain BisA53).